The chain runs to 162 residues: 2-C-methyl-D-erythritol 2,4-cyclodiphosphate synthase (162 aa).

2 residues coordinate a divalent metal cation: Asp8 and His10. 4-CDP-2-C-methyl-D-erythritol 2-phosphate contacts are provided by residues 8-10 and 36-37; these read DVH and HS. An a divalent metal cation-binding site is contributed by His44. 4-CDP-2-C-methyl-D-erythritol 2-phosphate contacts are provided by residues 58–60, 63–67, 102–108, 134–137, Phe141, and Arg144; these read DIG, FPDTD, AQAPKMA, and TTTE.

This sequence belongs to the IspF family. As to quaternary structure, homotrimer. It depends on a divalent metal cation as a cofactor.

The catalysed reaction is 4-CDP-2-C-methyl-D-erythritol 2-phosphate = 2-C-methyl-D-erythritol 2,4-cyclic diphosphate + CMP. It participates in isoprenoid biosynthesis; isopentenyl diphosphate biosynthesis via DXP pathway; isopentenyl diphosphate from 1-deoxy-D-xylulose 5-phosphate: step 4/6. In terms of biological role, involved in the biosynthesis of isopentenyl diphosphate (IPP) and dimethylallyl diphosphate (DMAPP), two major building blocks of isoprenoid compounds. Catalyzes the conversion of 4-diphosphocytidyl-2-C-methyl-D-erythritol 2-phosphate (CDP-ME2P) to 2-C-methyl-D-erythritol 2,4-cyclodiphosphate (ME-CPP) with a corresponding release of cytidine 5-monophosphate (CMP). This Yersinia enterocolitica serotype O:8 / biotype 1B (strain NCTC 13174 / 8081) protein is 2-C-methyl-D-erythritol 2,4-cyclodiphosphate synthase.